Reading from the N-terminus, the 427-residue chain is METEQQEETFTNTETNGKRPAEDMEEEQAFKRSRNTDEMVELRILLQSKNAGAVIGKGGKNIKALRTDYNASVSVPDSSGPERILSISADTETIGEILKKIIPTLEEYQHYKGSDFDCELRLLIHQSLAGGIIGVKGAKIKELRENTQTTIKLFQECCPHSTDRVVLIGGKPDRVVECIKIILDLISESPIKGRAQPYDPNFYDETYDYGGFTMMFDDRRGRPVGFPMRGRGGFDRMPPNRGGRPMPPSRRDYDDMSPRRGPPPPPPGRGGRGGSRARNLPLPPPPPPRGGDLMSYDRRGRPGDRYDGMMMQCHVDACDDMQPPELFEGGSGYDYSYAGGRGSYGDLGGPIITTQVTIPKDLAGSIIGKGGQRIKQIRHESGASIKIDEPLEGSEDRIITITGTQDQIQNAQYLLQNSVKQYSGKFF.

Positions 1–34 are disordered; it reads METEQQEETFTNTETNGKRPAEDMEEEQAFKRSR. Positions 16–34 are enriched in basic and acidic residues; that stretch reads NGKRPAEDMEEEQAFKRSR. 2 KH domains span residues 39 to 101 and 117 to 182; these read MVEL…LKKI and DCEL…IKII. Repeat copies occupy residues 51–73 and 56–59. The tract at residues 51–385 is 2 X 22 AA approximate repeats; the sequence is AGAVIGKGGK…QIRHESGASI (335 aa). Positions 56 to 371 are 5 X 4 AA repeats of G-X-G-G; it reads GKGGKNIKAL…LAGSIIGKGG (316 aa). The interval 209 to 246 is RNA-binding RGG-box; the sequence is YGGFTMMFDDRRGRPVGFPMRGRGGFDRMPPNRGGRPM. Repeat copies occupy residues 218–223, 230–233, and 240–243. Residues 218–302 form a 2 X 6 AA approximate repeats region; that stretch reads DRRGRPVGFP…LMSYDRRGRP (85 aa). The interval 221 to 305 is disordered; it reads GRPVGFPMRG…YDRRGRPGDR (85 aa). The span at 249–258 shows a compositional bias: basic and acidic residues; sequence SRRDYDDMSP. 4 tandem repeats follow at residues 268-271, 297-302, 363-385, and 368-371. A compositionally biased stretch (basic and acidic residues) spans 295–305; sequence SYDRRGRPGDR. The KH 3 domain maps to 351-415; it reads IITTQVTIPK…DQIQNAQYLL (65 aa).

Its subcellular location is the cytoplasm. It localises to the nucleus. The protein localises to the nucleoplasm. Its function is as follows. One of the major pre-mRNA-binding proteins. Binds tenaciously to poly(C) sequences. Likely to play a role in the nuclear metabolism of hnRNAs, particularly for pre-mRNAs that contain cytidine-rich sequences. Can also bind poly(C) single-stranded DNA. May play an important role in p53/TP53 response to DNA damage, acting at the level of both transcription activation and repression. As part of a ribonucleoprotein complex, may negatively regulate the transcription of genes involved in neuronal differentiation. This is Heterogeneous nuclear ribonucleoprotein K (HNRNPK) from Gallus gallus (Chicken).